The chain runs to 429 residues: Histidine--tRNA ligase (429 aa).

It belongs to the class-II aminoacyl-tRNA synthetase family. In terms of assembly, homodimer.

It localises to the cytoplasm. It carries out the reaction tRNA(His) + L-histidine + ATP = L-histidyl-tRNA(His) + AMP + diphosphate + H(+). This Pelodictyon phaeoclathratiforme (strain DSM 5477 / BU-1) protein is Histidine--tRNA ligase.